The primary structure comprises 107 residues: L-amino-acid oxidase (107 aa).

Residue 35–38 coordinates FAD; that stretch reads GPMR. Substrate contacts are provided by Arg-38 and His-49.

Belongs to the flavin monoamine oxidase family. FIG1 subfamily. Homodimer; non-covalently linked. FAD serves as cofactor. N-glycosylated. As to expression, expressed by the venom gland.

The protein resides in the secreted. It catalyses the reaction an L-alpha-amino acid + O2 + H2O = a 2-oxocarboxylate + H2O2 + NH4(+). The enzyme catalyses L-leucine + O2 + H2O = 4-methyl-2-oxopentanoate + H2O2 + NH4(+). The catalysed reaction is L-phenylalanine + O2 + H2O = 3-phenylpyruvate + H2O2 + NH4(+). It carries out the reaction L-tryptophan + O2 + H2O = indole-3-pyruvate + H2O2 + NH4(+). It catalyses the reaction L-methionine + O2 + H2O = 4-methylsulfanyl-2-oxobutanoate + H2O2 + NH4(+). The enzyme catalyses L-isoleucine + O2 + H2O = (S)-3-methyl-2-oxopentanoate + H2O2 + NH4(+). The catalysed reaction is L-arginine + O2 + H2O = 5-guanidino-2-oxopentanoate + H2O2 + NH4(+). It carries out the reaction L-histidine + O2 + H2O = 3-(imidazol-5-yl)pyruvate + H2O2 + NH4(+). Functionally, catalyzes an oxidative deamination of predominantly hydrophobic and aromatic L-amino acids, thus producing hydrogen peroxide that may contribute to the diverse toxic effects of this enzyme. Shows high activity on L-Met, moderate activity on L-Trp, L-Leu, L-His, L-Phe, L-Arg, L-Ile, low activity on L-Val, L-Glu, L-Lys, L-Gln, L-Asn, L-Tyr, L-Ala, and no activity on L-Asp, L-Ser, L-Pro, L-Gly, L-Thr and L-Cys. Shows antimicrobial activity inhibiting the growth of both Gram-negative and Gram-positive bacteria. Also inhibits platelet aggregation induced by ADP or collagen. Effects of snake L-amino oxidases on platelets are controversial, since they either induce aggregation or inhibit agonist-induced aggregation. These different effects are probably due to different experimental conditions. This protein may also induce hemorrhage, hemolysis, edema, apoptosis, and have antiparasitic activities. This is L-amino-acid oxidase from Macrovipera lebetinus (Levantine viper).